Here is a 166-residue protein sequence, read N- to C-terminus: Small ribosomal subunit protein bS18m (166 aa).

The N-terminal 31 residues, 1 to 31 (MLGRRIFSPAPNRGFILCNLIQSNNSTRRGF), are a transit peptide targeting the mitochondrion. The interval 29 to 48 (RGFSDNRKFNERNSEASSNV) is disordered. Residues 30-42 (GFSDNRKFNERNS) are compositionally biased toward basic and acidic residues.

Belongs to the bacterial ribosomal protein bS18 family. Component of the mitochondrial small ribosomal subunit (mt-SSU). Mature yeast 74S mitochondrial ribosomes consist of a small (37S) and a large (54S) subunit. The 37S small subunit contains a 15S ribosomal RNA (15S mt-rRNA) and at least 32 different proteins. The 54S large subunit contains a 21S rRNA (21S mt-rRNA) and at least 45 different proteins.

Its subcellular location is the mitochondrion. Component of the mitochondrial ribosome (mitoribosome), a dedicated translation machinery responsible for the synthesis of mitochondrial genome-encoded proteins, including at least some of the essential transmembrane subunits of the mitochondrial respiratory chain. The mitoribosomes are attached to the mitochondrial inner membrane and translation products are cotranslationally integrated into the membrane. The sequence is that of Small ribosomal subunit protein bS18m (rsm18) from Schizosaccharomyces pombe (strain 972 / ATCC 24843) (Fission yeast).